Consider the following 390-residue polypeptide: S-adenosylmethionine:tRNA ribosyltransferase-isomerase (390 aa).

Residues 1 to 22 (MTQPLSQDQHDSSSNMPTDNAE) form a disordered region.

It belongs to the QueA family. Monomer.

It localises to the cytoplasm. The catalysed reaction is 7-aminomethyl-7-carbaguanosine(34) in tRNA + S-adenosyl-L-methionine = epoxyqueuosine(34) in tRNA + adenine + L-methionine + 2 H(+). It functions in the pathway tRNA modification; tRNA-queuosine biosynthesis. In terms of biological role, transfers and isomerizes the ribose moiety from AdoMet to the 7-aminomethyl group of 7-deazaguanine (preQ1-tRNA) to give epoxyqueuosine (oQ-tRNA). This chain is S-adenosylmethionine:tRNA ribosyltransferase-isomerase, found in Psychrobacter sp. (strain PRwf-1).